The primary structure comprises 373 residues: MKILVIGAGPAGLVFASQLKQARPLWAIDIVEKNDEQEVLGWGVVLPGRPGQHPANPLSYLDAPERLNPQFLEDFKLVHHNEPSLMSTGVLLCGVERRGLVHALRDKCRSQGIAIRFESPLLEHGELPLADYDLVVLANGVNHKTAHFTEALVPQVDYGRNKYIWYGTSQLFDQMNLVFRTHGKDIFIAHAYKYSDTMSTFIVECSEETYARARLGEMSEEASAEYVAKVFQAELGGHGLVSQPGLGWRNFMTLSHDRCHDGKLVLLGDALQSGHFSIGHGTTMAVVVAQLLVKALCTEDGVPAALKRFEERALPLVQLFRGHADNSRVWFETVEERMHLSSAEFVQSFDARRKSLPPMPEALAQNLRYALQR.

Position 2-20 (2-20 (KILVIGAGPAGLVFASQLK)) interacts with FAD.

Requires FAD as cofactor.

It carries out the reaction protodeoxyviolaceinate + NADH + O2 + H(+) = protoviolaceinate + NAD(+) + H2O. The catalysed reaction is protodeoxyviolaceinate + NADPH + O2 + H(+) = protoviolaceinate + NADP(+) + H2O. It functions in the pathway pigment biosynthesis; violacein biosynthesis. Catalyzes the oxygenation of the 6-position of protodeoxyviolaceinate to form proviolacein. This chain is Protodeoxyviolaceinate monooxygenase (vioD), found in Chromobacterium violaceum (strain ATCC 12472 / DSM 30191 / JCM 1249 / CCUG 213 / NBRC 12614 / NCIMB 9131 / NCTC 9757 / MK).